We begin with the raw amino-acid sequence, 109 residues long: B melanoma antigen 3 (109 aa).

The first 17 residues, 1–17, serve as a signal peptide directing secretion; it reads MAAGVVFLALSAQLLQA.

The protein belongs to the BAGE family. As to expression, not expressed in normal tissues except in testis. Expressed in melanoma, bladder and lung carcinomas.

The protein resides in the secreted. Unknown. Candidate gene encoding tumor antigens. This chain is B melanoma antigen 3 (BAGE3), found in Homo sapiens (Human).